The sequence spans 335 residues: Dihydroorotate dehydrogenase (quinone) (335 aa).

FMN is bound by residues 58-62 (AGADK) and threonine 82. Substrate is bound at residue lysine 62. 107–111 (NRNGF) provides a ligand contact to substrate. Positions 135 and 168 each coordinate FMN. Asparagine 168 provides a ligand contact to substrate. Serine 171 serves as the catalytic Nucleophile. Substrate is bound at residue asparagine 173. FMN contacts are provided by lysine 213 and glycine 241. 242-243 (NT) contacts substrate. Residues glycine 264, glycine 293, and 314–315 (YS) each bind FMN.

Belongs to the dihydroorotate dehydrogenase family. Type 2 subfamily. As to quaternary structure, monomer. Requires FMN as cofactor.

It localises to the cell membrane. It carries out the reaction (S)-dihydroorotate + a quinone = orotate + a quinol. The protein operates within pyrimidine metabolism; UMP biosynthesis via de novo pathway; orotate from (S)-dihydroorotate (quinone route): step 1/1. Catalyzes the conversion of dihydroorotate to orotate with quinone as electron acceptor. This Actinobacillus pleuropneumoniae serotype 5b (strain L20) protein is Dihydroorotate dehydrogenase (quinone).